We begin with the raw amino-acid sequence, 564 residues long: Dihydropyrimidinase-related protein 5 (564 aa).

Thr509 and Thr514 each carry phosphothreonine. A phosphoserine mark is found at Ser532 and Ser538. Arg559 is modified (omega-N-methylarginine).

It belongs to the metallo-dependent hydrolases superfamily. Hydantoinase/dihydropyrimidinase family. Homotetramer, and heterotetramer with other DPYS-like proteins. Interacts with DPYSL2, DPYSL3 and DPYSL4. Interacts with MAP2 and TUBB3.

Its subcellular location is the cytoplasm. In terms of biological role, involved in the negative regulation of dendrite outgrowth. This chain is Dihydropyrimidinase-related protein 5 (DPYSL5), found in Homo sapiens (Human).